The following is a 269-amino-acid chain: 3'(2'),5'-bisphosphate nucleotidase CysQ (269 aa).

Mg(2+)-binding residues include Glu69, Asp89, Leu91, Asp92, and Asp216. Residue Glu69 participates in substrate binding. Residues Leu91 to Thr94 and Asp216 contribute to the substrate site.

This sequence belongs to the inositol monophosphatase superfamily. CysQ family. Mg(2+) serves as cofactor.

It localises to the cell inner membrane. It catalyses the reaction adenosine 3',5'-bisphosphate + H2O = AMP + phosphate. Its function is as follows. Converts adenosine-3',5'-bisphosphate (PAP) to AMP. This Haemophilus influenzae (strain ATCC 51907 / DSM 11121 / KW20 / Rd) protein is 3'(2'),5'-bisphosphate nucleotidase CysQ.